A 252-amino-acid chain; its full sequence is Trans-aconitate 2-methyltransferase (252 aa).

This sequence belongs to the methyltransferase superfamily. Tam family.

Its subcellular location is the cytoplasm. The enzyme catalyses trans-aconitate + S-adenosyl-L-methionine = (E)-3-(methoxycarbonyl)pent-2-enedioate + S-adenosyl-L-homocysteine. Catalyzes the S-adenosylmethionine monomethyl esterification of trans-aconitate. The polypeptide is Trans-aconitate 2-methyltransferase (Escherichia coli O139:H28 (strain E24377A / ETEC)).